We begin with the raw amino-acid sequence, 115 residues long: LSM complex subunit LSM7 (115 aa).

Residues Met1 to Asn10 show a composition bias toward basic and acidic residues. Residues Met1 to Lys23 form a disordered region. Positions Glu25–Ser108 constitute a Sm domain.

Belongs to the snRNP Sm proteins family. Component of the heptameric LSM1-LSM7 complex that forms a seven-membered ring structure with a donut shape. The LSm subunits are arranged in the order LSM1, LSM2, LSM3, LSM6, LSM5, LSM7 and LSM4. Except for LSM1, where a C-terminal helix crosses the ring structure to form additional interactions with LSM3 and LSM6, each subunit interacts only with its two neighboring subunits. The LSM1-LSM7 complex interacts with PAT1; within the complex PAT1 has direct interactions with LSM2 and LSM3. The LSM1-LSM7 complex interacts with XRN1. Component of the heptameric LSM2-LSM8 complex that forms a seven-membered ring structure with a donut shape; an RNA strand can pass through the hole in the center of the ring structure. The LSm subunits are arranged in the order LSM8, LSM2, LSM3, LSM6, LSM5, LSM7 and LSM4. Component of the spliceosome U4/U6-U5 tri-snRNP complex composed of the U4, U6 and U5 snRNAs and at least PRP3, PRP4, PRP6, PRP8, PRP18, PRP31, PRP38, SNU13, SNU23, SNU66, SNU114, SPP381, SMB1, SMD1, SMD2, SMD3, SMX2, SMX3, LSM2, LSM3, LSM4, LSM5, LSM6, LSM7, LSM8, BRR2 and DIB1. May be found in a complex comprising LSM2-LSM7 without LSM1 or LSM8; the complex associates with pre-P RNA and snoRNA SNR5.

The protein resides in the nucleus. It is found in the nucleolus. Its subcellular location is the cytoplasm. In terms of biological role, component of LSm protein complexes, which are involved in RNA processing and may function in a chaperone-like manner. Component of the cytoplasmic LSM1-LSM7 complex which is involved in mRNA degradation by activating the decapping step. Together with PAT1, the LSM1-LSM7 complex binds to osmotic stress-activated mRNAs to attenuate the osmotic stress response, probably by limiting ribosome access to the mRNA and consequently translation. Component of the nuclear LSM2-LSM8 complex, which is involved in spliceosome assembly. The LSM2-LSM8 complex plays a role in the biogenesis of the spliceosomal U4/U6-U5 tri-snRNP complex by accelerating PRP24-mediated annealing of U4/U6 di-snRNA. The LSM2-LSM8 complex binds U6 snRNA terminating with a non-cyclic 3' phosphate group. LSM2-LSM8 is probably also involved in degradation of nuclear pre-mRNA by targeting them for decapping. LSM2-LSM8 could be involved in processing of pre-tRNAs, pre-rRNAs and U3 snoRNA, although involvement may be indirect. In a complex that probably contains LSM2-LSM7, but not LSM1 or LSM8, associates with the precursor of the RNA component of RNase P (pre-P RNA) and may be involved in maturing pre-P RNA; the complex also associates with snoRNA SNR5. This chain is LSM complex subunit LSM7 (LSM7), found in Saccharomyces cerevisiae (strain ATCC 204508 / S288c) (Baker's yeast).